A 38-amino-acid chain; its full sequence is Conotoxin r7a (38 aa).

Residues 1–5 (APAKR) constitute a propeptide that is removed on maturation. Trp-6 bears the 6'-bromotryptophan mark. Glu-10 and Glu-11 each carry 4-carboxyglutamate. Cystine bridges form between Cys-12–Cys-26, Cys-19–Cys-30, and Cys-25–Cys-35. At Trp-15 the chain carries 6'-bromotryptophan. Residues Glu-20 and Glu-31 each carry the 4-carboxyglutamate modification. Trp-38 is subject to 6'-bromotryptophan.

The protein belongs to the conotoxin O2 superfamily. In terms of tissue distribution, expressed by the venom duct.

The protein resides in the secreted. Its function is as follows. Induces a sleep-like state in mice. This is Conotoxin r7a from Conus radiatus (Rayed cone).